A 311-amino-acid chain; its full sequence is Coproporphyrin III ferrochelatase 1 (311 aa).

Residues tyrosine 12, arginine 29, 45–46 (RY), serine 53, and tyrosine 124 contribute to the Fe-coproporphyrin III site. Histidine 182 and glutamate 263 together coordinate Fe(2+).

It belongs to the ferrochelatase family.

It is found in the cytoplasm. The catalysed reaction is Fe-coproporphyrin III + 2 H(+) = coproporphyrin III + Fe(2+). The protein operates within porphyrin-containing compound metabolism; protoheme biosynthesis. In terms of biological role, involved in coproporphyrin-dependent heme b biosynthesis. Catalyzes the insertion of ferrous iron into coproporphyrin III to form Fe-coproporphyrin III. This chain is Coproporphyrin III ferrochelatase 1, found in Bacillus cereus (strain ATCC 10987 / NRS 248).